Reading from the N-terminus, the 113-residue chain is UPF0102 protein CHU_0465 (113 aa).

The protein belongs to the UPF0102 family.

The protein is UPF0102 protein CHU_0465 of Cytophaga hutchinsonii (strain ATCC 33406 / DSM 1761 / CIP 103989 / NBRC 15051 / NCIMB 9469 / D465).